We begin with the raw amino-acid sequence, 267 residues long: MSGQELVTLNVGGKVFTTRSSTLQQFPGSRLMRMLDGRDKEFKMVDGQIFVDRDGVLFSFILDFLRTQQLLLPTDFSDHLRLQREALFYELNPLVDLLNQEHKLQPRPALVEVHFLSRNTQAFFRVFGSCSKTIEMLTGRITVFIEQPSAPASSSNSFPQMTLLPLPPQRPSYHDLVFQCGSDSTTDNQTRIRYISIKPDNRKLANGTNVLGLLIDTLLMEGFHLVGTRTVSSEDRTECYSFERIKKPDALAMNKTLKSETTLMPEQ.

Residues 5-74 enclose the BTB domain; the sequence is ELVTLNVGGK…LRTQQLLLPT (70 aa).

As to quaternary structure, can form homooligomers. Interacts with KCNA1 (via cytoplasmic N-terminal domain) and KCNA4.

It is found in the endoplasmic reticulum. In terms of biological role, inhibits potassium fluxes in cells. May regulate Kv1 family channel proteins by retaining a fraction of channels in endomembranes. This Bos taurus (Bovine) protein is Potassium channel regulatory protein (KCNRG).